The chain runs to 619 residues: Chaperone protein DnaK (619 aa).

Threonine 175 is subject to Phosphothreonine; by autocatalysis. The disordered stretch occupies residues 578-619 (NGGAQGQGFDPNNMGGANAGAGATNNNDDNVVDADFEVQDDK). Over residues 589 to 606 (NNMGGANAGAGATNNNDD) the composition is skewed to low complexity. The segment covering 607–619 (NVVDADFEVQDDK) has biased composition (acidic residues).

Belongs to the heat shock protein 70 family.

Its function is as follows. Acts as a chaperone. The sequence is that of Chaperone protein DnaK from Clostridium perfringens (strain ATCC 13124 / DSM 756 / JCM 1290 / NCIMB 6125 / NCTC 8237 / Type A).